Consider the following 310-residue polypeptide: Apolipoprotein E (310 aa).

Positions 1-18 (MKVLWAALVVTLLAGCQA) are cleaved as a signal peptide. 8 repeat units span residues 77-98 (VLIEETMKEVKTYKAELEQQLG), 99-120 (PMAQETQARVSKELQAAQARLG), 121-142 (ADMEDVRNRLVQYRSELQAMMG), 143-164 (QSTEELRGRLNSHLRKLRKRLL), 165-186 (RDAEDLQKRLAVYQAGIREGAE), 187-204 (RSVNTLRERLGPLVEQAA), 205-226 (TVRSLVSKPLQERAEAWGQRLR), and 227-248 (GRLEKVGIQAGDRLDEVREQVQ). Residues 77–248 (VLIEETMKEV…RLDEVREQVQ (172 aa)) form an 8 X 22 AA approximate tandem repeats region. The residue at position 140 (M140) is a Methionine sulfoxide. Phosphoserine is present on S144. The interval 155–165 (HLRKLRKRLLR) is LDL and other lipoprotein receptors binding. Residue 159–162 (LRKR) coordinates heparin. A lipid-binding and lipoprotein association region spans residues 203–283 (AATVRSLVSK…SWFEPLVQDM (81 aa)). 222–229 (GQRLRGRL) provides a ligand contact to heparin. The interval 259 to 310 (NQMRLQAEAFHARLKSWFEPLVQDMQQRWAELVEKVQLAVGTSPTSESSEKQ) is homooligomerization. The specificity for association with VLDL stretch occupies residues 271–283 (RLKSWFEPLVQDM).

Belongs to the apolipoprotein A1/A4/E family. In terms of assembly, homotetramer. May interact with ABCA1; functionally associated with ABCA1 in the biogenesis of HDLs. May interact with APP/A4 amyloid-beta peptide; the interaction is extremely stable in vitro but its physiological significance is unclear. May interact with MAPT. May interact with MAP2. In the cerebrospinal fluid, interacts with secreted SORL1. Interacts with PMEL; this allows the loading of PMEL luminal fragment on ILVs to induce fibril nucleation. APOE exists as multiple glycosylated and sialylated glycoforms within cells and in plasma. The extent of glycosylation and sialylation are tissue and context specific. Post-translationally, glycated in plasma VLDL. In terms of processing, phosphorylated by FAM20C in the extracellular medium.

It is found in the secreted. The protein resides in the extracellular space. The protein localises to the extracellular matrix. Its subcellular location is the extracellular vesicle. It localises to the endosome. It is found in the multivesicular body. In terms of biological role, APOE is an apolipoprotein, a protein associating with lipid particles, that mainly functions in lipoprotein-mediated lipid transport between organs via the plasma and interstitial fluids. APOE is a core component of plasma lipoproteins and is involved in their production, conversion and clearance. Apolipoproteins are amphipathic molecules that interact both with lipids of the lipoprotein particle core and the aqueous environment of the plasma. As such, APOE associates with chylomicrons, chylomicron remnants, very low density lipoproteins (VLDL) and intermediate density lipoproteins (IDL) but shows a preferential binding to high-density lipoproteins (HDL). It also binds a wide range of cellular receptors including the LDL receptor/LDLR, the LDL receptor-related proteins LRP1, LRP2 and LRP8 and the very low-density lipoprotein receptor/VLDLR that mediate the cellular uptake of the APOE-containing lipoprotein particles. Finally, APOE also has a heparin-binding activity and binds heparan-sulfate proteoglycans on the surface of cells, a property that supports the capture and the receptor-mediated uptake of APOE-containing lipoproteins by cells. A main function of APOE is to mediate lipoprotein clearance through the uptake of chylomicrons, VLDLs, and HDLs by hepatocytes. APOE is also involved in the biosynthesis by the liver of VLDLs as well as their uptake by peripheral tissues ensuring the delivery of triglycerides and energy storage in muscle, heart and adipose tissues. By participating in the lipoprotein-mediated distribution of lipids among tissues, APOE plays a critical role in plasma and tissues lipid homeostasis. APOE is also involved in two steps of reverse cholesterol transport, the HDLs-mediated transport of cholesterol from peripheral tissues to the liver, and thereby plays an important role in cholesterol homeostasis. First, it is functionally associated with ABCA1 in the biogenesis of HDLs in tissues. Second, it is enriched in circulating HDLs and mediates their uptake by hepatocytes. APOE also plays an important role in lipid transport in the central nervous system, regulating neuron survival and sprouting. The chain is Apolipoprotein E (APOE) from Tapirus indicus (Asiatic tapir).